The chain runs to 651 residues: Acetyl-coenzyme A synthetase (651 aa).

CoA is bound by residues 189–192, threonine 311, and asparagine 335; that span reads RGGK. ATP contacts are provided by residues 387-389, 411-416, aspartate 500, and arginine 515; these read GEP and DTWWQT. Serine 523 contacts CoA. Arginine 526 contacts ATP. The Mg(2+) site is built by valine 537, histidine 539, and valine 542. Arginine 584 lines the CoA pocket. Lysine 609 bears the N6-acetyllysine mark.

It belongs to the ATP-dependent AMP-binding enzyme family. Mg(2+) is required as a cofactor. In terms of processing, acetylated. Deacetylation by the SIR2-homolog deacetylase activates the enzyme.

The enzyme catalyses acetate + ATP + CoA = acetyl-CoA + AMP + diphosphate. In terms of biological role, catalyzes the conversion of acetate into acetyl-CoA (AcCoA), an essential intermediate at the junction of anabolic and catabolic pathways. AcsA undergoes a two-step reaction. In the first half reaction, AcsA combines acetate with ATP to form acetyl-adenylate (AcAMP) intermediate. In the second half reaction, it can then transfer the acetyl group from AcAMP to the sulfhydryl group of CoA, forming the product AcCoA. This chain is Acetyl-coenzyme A synthetase, found in Rhizobium leguminosarum bv. trifolii (strain WSM2304).